Here is a 213-residue protein sequence, read N- to C-terminus: N-(5'-phosphoribosyl)anthranilate isomerase (213 aa).

Belongs to the TrpF family.

It carries out the reaction N-(5-phospho-beta-D-ribosyl)anthranilate = 1-(2-carboxyphenylamino)-1-deoxy-D-ribulose 5-phosphate. Its pathway is amino-acid biosynthesis; L-tryptophan biosynthesis; L-tryptophan from chorismate: step 3/5. This chain is N-(5'-phosphoribosyl)anthranilate isomerase, found in Hahella chejuensis (strain KCTC 2396).